The following is a 267-amino-acid chain: Short chain dehydrogenase claC (267 aa).

NADP(+) contacts are provided by Ile-27, Asp-73, Asn-100, and Arg-133. Active-site proton donor residues include Ser-149 and Ser-150. Residues Tyr-164, Lys-168, and Thr-199 each contribute to the NADP(+) site. Tyr-164 acts as the Proton acceptor in catalysis. Lys-168 serves as the catalytic Lowers pKa of active site Tyr.

It belongs to the short-chain dehydrogenases/reductases (SDR) family.

The protein operates within pigment biosynthesis. In terms of biological role, non-reducing polyketide synthase; part of the gene cluster that mediates the biosynthesis of the bianthraquinone cladofulvin, a conidial pigment not required for virulence but that plays a role in fitness and resistance to environmental stresses including UV light and low-temperature stress. The pathway begins with the synthesis of atrochrysone thioester by the polyketide synthase (PKS) claG. The atrochrysone carboxyl ACP thioesterase claF then breaks the thioester bond and releases the atrochrysone carboxylic acid from claG. This compound is decarboxylated by claH to yield emodin, which is further converted to chrysophanol hydroquinone by the reductase claC and the dehydratase claB. The cytochrome monooxygenase P450 claM then catalyzes the dimerization of nataloe-emodin to cladofulvin. This Passalora fulva (Tomato leaf mold) protein is Short chain dehydrogenase claC.